A 184-amino-acid chain; its full sequence is Putative serine carboxypeptidase-like 52 (184 aa).

The signal sequence occupies residues 1–22 (MRTFSPKLLLLLLLVLRHHAES). Asparagine 93 carries an N-linked (GlcNAc...) asparagine glycan.

It belongs to the peptidase S10 family.

The protein localises to the secreted. The polypeptide is Putative serine carboxypeptidase-like 52 (SCPL52) (Arabidopsis thaliana (Mouse-ear cress)).